The primary structure comprises 606 residues: Probable potassium transport system protein Kup (606 aa).

The next 12 membrane-spanning stretches (helical) occupy residues 18-38 (GLVF…VFAL), 46-66 (VFGI…AEYA), 97-117 (LTFV…DGVI), 138-158 (GLHQ…LFVF), 166-186 (VAGA…LSGA), 212-232 (GLAG…GEAL), 247-267 (AWYI…AFII), 287-307 (LYIP…QAMI), 339-359 (IYIG…MLVF), 368-388 (AYGL…ILIL), 395-415 (WKAV…TACL), and 418-438 (LPHG…TILV).

Belongs to the HAK/KUP transporter (TC 2.A.72) family.

It is found in the cell inner membrane. The enzyme catalyses K(+)(in) + H(+)(in) = K(+)(out) + H(+)(out). Functionally, transport of potassium into the cell. Likely operates as a K(+):H(+) symporter. The chain is Probable potassium transport system protein Kup from Trichlorobacter lovleyi (strain ATCC BAA-1151 / DSM 17278 / SZ) (Geobacter lovleyi).